Reading from the N-terminus, the 344-residue chain is Biotin synthase (344 aa).

A Radical SAM core domain is found at 65–290 (PEVEVEGIIS…RTMLRFAGGR (226 aa)). [4Fe-4S] cluster contacts are provided by Cys-80, Cys-84, and Cys-87. 4 residues coordinate [2Fe-2S] cluster: Cys-123, Cys-156, Cys-215, and Arg-285.

The protein belongs to the radical SAM superfamily. Biotin synthase family. In terms of assembly, homodimer. [4Fe-4S] cluster is required as a cofactor. The cofactor is [2Fe-2S] cluster.

It carries out the reaction (4R,5S)-dethiobiotin + (sulfur carrier)-SH + 2 reduced [2Fe-2S]-[ferredoxin] + 2 S-adenosyl-L-methionine = (sulfur carrier)-H + biotin + 2 5'-deoxyadenosine + 2 L-methionine + 2 oxidized [2Fe-2S]-[ferredoxin]. It participates in cofactor biosynthesis; biotin biosynthesis; biotin from 7,8-diaminononanoate: step 2/2. Functionally, catalyzes the conversion of dethiobiotin (DTB) to biotin by the insertion of a sulfur atom into dethiobiotin via a radical-based mechanism. In Mycolicibacterium paratuberculosis (strain ATCC BAA-968 / K-10) (Mycobacterium paratuberculosis), this protein is Biotin synthase.